The chain runs to 177 residues: Large ribosomal subunit protein uL6 (177 aa).

It belongs to the universal ribosomal protein uL6 family. As to quaternary structure, part of the 50S ribosomal subunit.

Its function is as follows. This protein binds to the 23S rRNA, and is important in its secondary structure. It is located near the subunit interface in the base of the L7/L12 stalk, and near the tRNA binding site of the peptidyltransferase center. The sequence is that of Large ribosomal subunit protein uL6 from Rhodopseudomonas palustris (strain HaA2).